The sequence spans 92 residues: C-C motif chemokine 4 (92 aa).

Residues 1-23 form the signal peptide; that stretch reads MKLGVTVLSVALLVAALCPPALS. 2 cysteine pairs are disulfide-bonded: Cys-34/Cys-58 and Cys-35/Cys-74.

This sequence belongs to the intercrine beta (chemokine CC) family. In terms of assembly, homodimer.

The protein localises to the secreted. Functionally, monokine with inflammatory and chemokinetic properties. The protein is C-C motif chemokine 4 (CCL4) of Oryctolagus cuniculus (Rabbit).